Consider the following 147-residue polypeptide: Large ribosomal subunit protein uL13 (147 aa).

The protein belongs to the universal ribosomal protein uL13 family. In terms of assembly, part of the 50S ribosomal subunit.

Its function is as follows. This protein is one of the early assembly proteins of the 50S ribosomal subunit, although it is not seen to bind rRNA by itself. It is important during the early stages of 50S assembly. The chain is Large ribosomal subunit protein uL13 from Pseudothermotoga lettingae (strain ATCC BAA-301 / DSM 14385 / NBRC 107922 / TMO) (Thermotoga lettingae).